Here is a 280-residue protein sequence, read N- to C-terminus: Ribulose-phosphate 3-epimerase, chloroplastic (280 aa).

Residues 1 to 45 constitute a chloroplast transit peptide; the sequence is SLGSSTLLQSQISGFGGSQKLQKISFSNPNSLTFTRRRIQTVVNA. Ser62 contributes to the substrate binding site. The a divalent metal cation site is built by His87, Asp89, and His120. Asp89 acts as the Proton acceptor in catalysis. Residues His120, 198 to 201, 231 to 233, and 253 to 254 each bind substrate; these read GFGG, DGG, and GS. Asp231 contacts a divalent metal cation. Asp231 (proton donor) is an active-site residue.

This sequence belongs to the ribulose-phosphate 3-epimerase family. Homohexamer. Requires Co(2+) as cofactor. Fe(2+) serves as cofactor. It depends on Mn(2+) as a cofactor. Zn(2+) is required as a cofactor. Highest level of expression in leaves, whereas it is low in roots, tubers, and stems.

The protein resides in the plastid. Its subcellular location is the chloroplast thylakoid membrane. The enzyme catalyses D-ribulose 5-phosphate = D-xylulose 5-phosphate. Its pathway is carbohydrate biosynthesis; Calvin cycle. In terms of biological role, catalyzes the reversible epimerization of D-ribulose 5-phosphate to D-xylulose 5-phosphate. The chain is Ribulose-phosphate 3-epimerase, chloroplastic from Solanum tuberosum (Potato).